A 313-amino-acid polypeptide reads, in one-letter code: Proline iminopeptidase (313 aa).

The AB hydrolase-1 domain maps to K35–E298. Catalysis depends on S110, which acts as the Nucleophile. D266 is an active-site residue. Catalysis depends on H294, which acts as the Proton donor.

It belongs to the peptidase S33 family. As to quaternary structure, homooligomer.

It is found in the cytoplasm. The catalysed reaction is Release of N-terminal proline from a peptide.. Functionally, may be involved in proline metabolism and sensitivity to ascamycin. Has ascamycin dealanylating activity. The protein is Proline iminopeptidase (pip) of Xanthomonas citri (Xanthomonas campestris pv. citri).